The following is a 635-amino-acid chain: ATP-dependent zinc metalloprotease FtsH (635 aa).

Over 1 to 4 (MVKN) the chain is Cytoplasmic. The helical transmembrane segment at 5-25 (LVLWVVVAVIMMTAYQSFNSS) threads the bilayer. Topologically, residues 26-97 (SVENSTDYTT…VEGTPFERRG (72 aa)) are periplasmic. Residues 98 to 118 (FLSQILISWFPMLFLVGVWVF) traverse the membrane as a helical segment. Over 119 to 635 (FMRQMQGGGG…AVENTDDFNV (517 aa)) the chain is Cytoplasmic. 191–198 (GPPGTGKT) lines the ATP pocket. His413 contributes to the Zn(2+) binding site. Glu414 is an active-site residue. Zn(2+)-binding residues include His417 and Asp491. The tract at residues 593–635 (NREPVTPPSGWGEPKTQQAAYANSTTNDTKPESAVENTDDFNV) is disordered. A compositionally biased stretch (polar residues) spans 607–620 (KTQQAAYANSTTND).

This sequence in the central section; belongs to the AAA ATPase family. The protein in the C-terminal section; belongs to the peptidase M41 family. As to quaternary structure, homohexamer. Requires Zn(2+) as cofactor.

The protein localises to the cell inner membrane. Acts as a processive, ATP-dependent zinc metallopeptidase for both cytoplasmic and membrane proteins. Plays a role in the quality control of integral membrane proteins. This is ATP-dependent zinc metalloprotease FtsH from Haemophilus influenzae (strain ATCC 51907 / DSM 11121 / KW20 / Rd).